The sequence spans 365 residues: Protein SGT1 homolog (365 aa).

Ala-2 carries the N-acetylalanine modification. 3 TPR repeats span residues 11–44 (SQRF…KPDD), 45–78 (AQYY…NPNN), and 79–112 (STAM…DIET). The region spanning 169–258 (QSKIKYDWYQ…PEAVRWEKLE (90 aa)) is the CS domain. The residue at position 265 (Thr-265) is a Phosphothreonine. Positions 276 to 365 (LYPSSSPYTR…PPDDMEWKKY (90 aa)) constitute an SGS domain. Phosphoserine is present on Ser-281. The residue at position 284 (Thr-284) is a Phosphothreonine. Lys-295 is covalently cross-linked (Glycyl lysine isopeptide (Lys-Gly) (interchain with G-Cter in SUMO1); alternate). Residue Lys-295 forms a Glycyl lysine isopeptide (Lys-Gly) (interchain with G-Cter in SUMO2); alternate linkage. Ser-331 carries the phosphoserine modification.

Belongs to the SGT1 family. In terms of assembly, probably associates with SCF (SKP1-CUL1-F-box protein) complex through interaction with SKP1. Interacts with S100A6. Interacts with HSP90. In terms of processing, phosphorylated at Ser-281 and Ser-331, dephosphorylation promotes nuclear translocation, most likely due to disruption of the SUGT1-HSP90 complex.

It localises to the cytoplasm. The protein resides in the nucleus. In terms of biological role, may play a role in ubiquitination and subsequent proteasomal degradation of target proteins. The protein is Protein SGT1 homolog of Homo sapiens (Human).